The chain runs to 951 residues: Valine--tRNA ligase (951 aa).

A 'HIGH' region motif is present at residues 42–52 (PNVTGSLHMGH). The short motif at 554 to 558 (KMSKS) is the 'KMSKS' region element. Lys557 lines the ATP pocket. The stretch at 880–944 (AGLINKEDEL…AEAKAKLIEQ (65 aa)) forms a coiled coil.

The protein belongs to the class-I aminoacyl-tRNA synthetase family. ValS type 1 subfamily. As to quaternary structure, monomer.

The protein localises to the cytoplasm. It carries out the reaction tRNA(Val) + L-valine + ATP = L-valyl-tRNA(Val) + AMP + diphosphate. Its function is as follows. Catalyzes the attachment of valine to tRNA(Val). As ValRS can inadvertently accommodate and process structurally similar amino acids such as threonine, to avoid such errors, it has a 'posttransfer' editing activity that hydrolyzes mischarged Thr-tRNA(Val) in a tRNA-dependent manner. The chain is Valine--tRNA ligase from Shigella dysenteriae serotype 1 (strain Sd197).